A 169-amino-acid chain; its full sequence is Lipoprotein signal peptidase (169 aa).

The next 2 helical transmembrane spans lie at Phe-56–Tyr-76 and Gln-84–Asp-104. Residues Asp-113 and Asp-139 contribute to the active site. A helical membrane pass occupies residues Trp-132 to Phe-152.

This sequence belongs to the peptidase A8 family.

It is found in the cell inner membrane. It carries out the reaction Release of signal peptides from bacterial membrane prolipoproteins. Hydrolyzes -Xaa-Yaa-Zaa-|-(S,diacylglyceryl)Cys-, in which Xaa is hydrophobic (preferably Leu), and Yaa (Ala or Ser) and Zaa (Gly or Ala) have small, neutral side chains.. The protein operates within protein modification; lipoprotein biosynthesis (signal peptide cleavage). Its function is as follows. This protein specifically catalyzes the removal of signal peptides from prolipoproteins. The protein is Lipoprotein signal peptidase of Chlorobium phaeovibrioides (strain DSM 265 / 1930) (Prosthecochloris vibrioformis (strain DSM 265)).